Here is a 513-residue protein sequence, read N- to C-terminus: Na(+)/H(+) antiporter NhaB (513 aa).

Transmembrane regions (helical) follow at residues 21–41 (ICII…SPFV), 64–84 (QPGG…AHHV), 88–108 (IMAN…IYFM), 119–139 (LLIV…SATF), 143–163 (FLDA…FYGV), 202–222 (LLMH…VGEP), 243–263 (LPVS…LEHF), 299–318 (MGIQ…LHLA), 322–344 (IIGL…HAIG), 350–370 (PMPF…IVDL), 389–409 (LALF…VFVG), and 477–497 (MALP…EFLL).

Belongs to the NhaB Na(+)/H(+) (TC 2.A.34) antiporter family.

The protein resides in the cell inner membrane. It catalyses the reaction 2 Na(+)(in) + 3 H(+)(out) = 2 Na(+)(out) + 3 H(+)(in). Its function is as follows. Na(+)/H(+) antiporter that extrudes sodium in exchange for external protons. This is Na(+)/H(+) antiporter NhaB from Actinobacillus pleuropneumoniae serotype 3 (strain JL03).